A 368-amino-acid chain; its full sequence is MRSLLLLIVILILGIKFYSIEFLATVLVISFLIFFHELGHFLAARSLGVKVEVFSIGFGKSLIEREFKGTNYRLSTLPLGGYVKLKGQDDMRPGFENLDKDSYSILSPLKKIYILFAGPFFNLILAFFLYIIIGNLGLNKLAPQIGNIAPNSAAQEIGLQKNDTILEINGIRIQTFDEISKHLSLDPLKILINREGKNLEFILTPKIGQGYNDFGQIVEKPQLGVSPNGTSTLVKHQGLESFKYAAQESFQASTLIIKGIVKLISGEVEAKNLGGIITMTEITSKAAQNSFTLLLFITALISINLGILNLLPIPMLDGGHILFNLYEMIFRRKVPQRTFEYLSYTGMAILLSLMLFATYNDISRIIGE.

A Zn(2+)-binding site is contributed by His-36. The active site involves Glu-37. Residue His-40 participates in Zn(2+) binding. The next 3 helical transmembrane spans lie at 112–134 (IYILFAGPFFNLILAFFLYIIIG), 291–313 (FTLLLFITALISINLGILNLLPI), and 338–360 (TFEYLSYTGMAILLSLMLFATYN). The PDZ domain occupies 126–197 (AFFLYIIIGN…LKILINREGK (72 aa)).

Belongs to the peptidase M50B family. It depends on Zn(2+) as a cofactor.

It localises to the cell inner membrane. This chain is Putative zinc metalloprotease Cj1068, found in Campylobacter jejuni subsp. jejuni serotype O:2 (strain ATCC 700819 / NCTC 11168).